The following is a 473-amino-acid chain: Photosystem II CP43 reaction center protein (473 aa).

Residues 1 to 14 (MKTLYSLRRYFHVE) constitute a propeptide that is removed on maturation. Position 15 is an N-acetylthreonine (T15). T15 carries the phosphothreonine modification. Helical transmembrane passes span 69–93 (LFEV…PHLA), 134–155 (LIGP…KDKN), 178–200 (KAMY…RVIS), 255–275 (KPFA…LSYS), and 291–312 (WFNN…ASQA). E367 is a [CaMn4O5] cluster binding site. The helical transmembrane segment at 447–471 (RARAAAAGFEKGIDRDTEPVLSMRP) threads the bilayer.

This sequence belongs to the PsbB/PsbC family. PsbC subfamily. As to quaternary structure, PSII is composed of 1 copy each of membrane proteins PsbA, PsbB, PsbC, PsbD, PsbE, PsbF, PsbH, PsbI, PsbJ, PsbK, PsbL, PsbM, PsbT, PsbX, PsbY, PsbZ, Psb30/Ycf12, at least 3 peripheral proteins of the oxygen-evolving complex and a large number of cofactors. It forms dimeric complexes. Binds multiple chlorophylls and provides some of the ligands for the Ca-4Mn-5O cluster of the oxygen-evolving complex. It may also provide a ligand for a Cl- that is required for oxygen evolution. PSII binds additional chlorophylls, carotenoids and specific lipids. serves as cofactor.

It localises to the plastid. Its subcellular location is the chloroplast thylakoid membrane. Its function is as follows. One of the components of the core complex of photosystem II (PSII). It binds chlorophyll and helps catalyze the primary light-induced photochemical processes of PSII. PSII is a light-driven water:plastoquinone oxidoreductase, using light energy to abstract electrons from H(2)O, generating O(2) and a proton gradient subsequently used for ATP formation. This is Photosystem II CP43 reaction center protein from Ostreococcus tauri.